We begin with the raw amino-acid sequence, 513 residues long: Histidine ammonia-lyase (513 aa).

Positions alanine 144 to glycine 146 form a cross-link, 5-imidazolinone (Ala-Gly). At serine 145 the chain carries 2,3-didehydroalanine (Ser).

The protein belongs to the PAL/histidase family. In terms of processing, contains an active site 4-methylidene-imidazol-5-one (MIO), which is formed autocatalytically by cyclization and dehydration of residues Ala-Ser-Gly.

The protein resides in the cytoplasm. The enzyme catalyses L-histidine = trans-urocanate + NH4(+). It participates in amino-acid degradation; L-histidine degradation into L-glutamate; N-formimidoyl-L-glutamate from L-histidine: step 1/3. The protein is Histidine ammonia-lyase of Streptococcus pyogenes serotype M18 (strain MGAS8232).